We begin with the raw amino-acid sequence, 94 residues long: Pyrimidine/purine nucleoside phosphorylase (94 aa).

This sequence belongs to the nucleoside phosphorylase PpnP family.

It catalyses the reaction a purine D-ribonucleoside + phosphate = a purine nucleobase + alpha-D-ribose 1-phosphate. The enzyme catalyses adenosine + phosphate = alpha-D-ribose 1-phosphate + adenine. It carries out the reaction cytidine + phosphate = cytosine + alpha-D-ribose 1-phosphate. The catalysed reaction is guanosine + phosphate = alpha-D-ribose 1-phosphate + guanine. It catalyses the reaction inosine + phosphate = alpha-D-ribose 1-phosphate + hypoxanthine. The enzyme catalyses thymidine + phosphate = 2-deoxy-alpha-D-ribose 1-phosphate + thymine. It carries out the reaction uridine + phosphate = alpha-D-ribose 1-phosphate + uracil. The catalysed reaction is xanthosine + phosphate = alpha-D-ribose 1-phosphate + xanthine. In terms of biological role, catalyzes the phosphorolysis of diverse nucleosides, yielding D-ribose 1-phosphate and the respective free bases. Can use uridine, adenosine, guanosine, cytidine, thymidine, inosine and xanthosine as substrates. Also catalyzes the reverse reactions. This is Pyrimidine/purine nucleoside phosphorylase from Salmonella agona (strain SL483).